The chain runs to 417 residues: UDP-N-acetylglucosamine 1-carboxyvinyltransferase (417 aa).

22–23 is a phosphoenolpyruvate binding site; that stretch reads KN. Arg91 is a UDP-N-acetyl-alpha-D-glucosamine binding site. The active-site Proton donor is Cys115. 2-(S-cysteinyl)pyruvic acid O-phosphothioketal is present on Cys115. Residues 120 to 124, Asp304, and Ile326 each bind UDP-N-acetyl-alpha-D-glucosamine; that span reads RPVDQ.

The protein belongs to the EPSP synthase family. MurA subfamily.

The protein localises to the cytoplasm. It carries out the reaction phosphoenolpyruvate + UDP-N-acetyl-alpha-D-glucosamine = UDP-N-acetyl-3-O-(1-carboxyvinyl)-alpha-D-glucosamine + phosphate. It functions in the pathway cell wall biogenesis; peptidoglycan biosynthesis. Its function is as follows. Cell wall formation. Adds enolpyruvyl to UDP-N-acetylglucosamine. This is UDP-N-acetylglucosamine 1-carboxyvinyltransferase from Desulfovibrio desulfuricans (strain ATCC 27774 / DSM 6949 / MB).